Here is a 99-residue protein sequence, read N- to C-terminus: MANVNIKPLEDRVLVQIVEAETTTASGLVIPDSAKEKPQEATVIAVGPGRWADDDDRIPMDVKEGDTVVFSKYGGTELKYNGEEYLLLTQRDILAVIEK.

This sequence belongs to the GroES chaperonin family. In terms of assembly, heptamer of 7 subunits arranged in a ring. Interacts with the chaperonin GroEL.

It is found in the cytoplasm. Functionally, together with the chaperonin GroEL, plays an essential role in assisting protein folding. The GroEL-GroES system forms a nano-cage that allows encapsulation of the non-native substrate proteins and provides a physical environment optimized to promote and accelerate protein folding. GroES binds to the apical surface of the GroEL ring, thereby capping the opening of the GroEL channel. In Corynebacterium jeikeium (strain K411), this protein is Co-chaperonin GroES.